A 394-amino-acid chain; its full sequence is Acetyl-CoA acetyltransferase (394 aa).

Residue Cys-88 is the Acyl-thioester intermediate of the active site. Residues His-349 and Cys-379 each act as proton acceptor in the active site.

It belongs to the thiolase-like superfamily. Thiolase family.

The protein resides in the cytoplasm. The enzyme catalyses 2 acetyl-CoA = acetoacetyl-CoA + CoA. The protein operates within metabolic intermediate biosynthesis; (R)-mevalonate biosynthesis; (R)-mevalonate from acetyl-CoA: step 1/3. This Escherichia coli (strain K12) protein is Acetyl-CoA acetyltransferase (atoB).